The primary structure comprises 149 residues: Hordoindoline-A (149 aa).

An N-terminal signal peptide occupies residues 1–19 (MKALFLMGLLALVASAAFA). The propeptide occupies 20–28 (QYGEVVGSY). The propeptide at 148–149 (YW) is removed in mature form.

Five disulfide bonds are present. In terms of tissue distribution, found in endosperm and aleurone layer of developing kernels, but not in the embryo.

It localises to the membrane. Its subcellular location is the secreted. The protein resides in the extracellular space. Its function is as follows. Acts as a membranotoxin, probably through its antibacterial and antifungal activities, contributing to the defense mechanism of the plant against predators. Forms monovalent cation-selective ion channels in membranes. Contributes to grain texture and hardness. This is Hordoindoline-A (HINA) from Hordeum vulgare (Barley).